The sequence spans 445 residues: UPF0210 protein STK_02450 (445 aa).

This sequence belongs to the UPF0210 family.

In Sulfurisphaera tokodaii (strain DSM 16993 / JCM 10545 / NBRC 100140 / 7) (Sulfolobus tokodaii), this protein is UPF0210 protein STK_02450.